A 468-amino-acid polypeptide reads, in one-letter code: MKSAVETLNPTRVRLTVEVPFEELKDSLDAAYKKINQQVTVKGFRKGKIPARVIDQRFGRGAVLEEAVNDALPKFYTDAVNEAELNPLGQPEVDITELKDGETLNFTAEVDIRPSIEIPDYSGIEVEVDAVEVTDEDVEKSVEQLRERFASTSPVERAAADGDVLTLDLQAKVDGEILEDGVADGVSYTIGSGELLDGIDEAVKGLEAGGEATFTSELKGGSAAGKEAEVTVKVSQVAARELPELDDDFAQLASEFDTLEELQADSRKRLANMKQYDQATQAQERVLDKLLELVEVPVPEKLLEDEINTRKHNLEHHQLGQMGLDLEKYLELQGKTAEEFETETREAAVKGIKTQFVLDELVKQEKLNVSQEELTEHLMRRAASSGMSPDQFAQAVVEQGQVPLLVGEVARGKALAAVVEKATVKDTNGEIVDLDDEEDEETEAAEADATEAADAEKADDKAEEKTEG.

Residues 162-243 (GDVLTLDLQA…VSQVAARELP (82 aa)) form the PPIase FKBP-type domain. Residues 428–468 (NGEIVDLDDEEDEETEAAEADATEAADAEKADDKAEEKTEG) form a disordered region. Residues 432–453 (VDLDDEEDEETEAAEADATEAA) are compositionally biased toward acidic residues. A compositionally biased stretch (basic and acidic residues) spans 454 to 468 (DAEKADDKAEEKTEG).

It belongs to the FKBP-type PPIase family. Tig subfamily.

Its subcellular location is the cytoplasm. The enzyme catalyses [protein]-peptidylproline (omega=180) = [protein]-peptidylproline (omega=0). In terms of biological role, involved in protein export. Acts as a chaperone by maintaining the newly synthesized protein in an open conformation. Functions as a peptidyl-prolyl cis-trans isomerase. In Streptomyces coelicolor (strain ATCC BAA-471 / A3(2) / M145), this protein is Trigger factor.